A 425-amino-acid chain; its full sequence is Adenosylhomocysteinase (425 aa).

Positions 60, 132, and 157 each coordinate substrate. NAD(+) is bound at residue T158–T160. Residues K187 and D191 each coordinate substrate. NAD(+)-binding positions include N192, G221–G226, E244, N279, S300–H302, and N347.

Belongs to the adenosylhomocysteinase family. Requires NAD(+) as cofactor.

It is found in the cytoplasm. It catalyses the reaction S-adenosyl-L-homocysteine + H2O = L-homocysteine + adenosine. It participates in amino-acid biosynthesis; L-homocysteine biosynthesis; L-homocysteine from S-adenosyl-L-homocysteine: step 1/1. Its function is as follows. May play a key role in the regulation of the intracellular concentration of adenosylhomocysteine. The polypeptide is Adenosylhomocysteinase (Synechocystis sp. (strain ATCC 27184 / PCC 6803 / Kazusa)).